The sequence spans 251 residues: Phosphoribosylaminoimidazole-succinocarboxamide synthase (251 aa).

Belongs to the SAICAR synthetase family.

It catalyses the reaction 5-amino-1-(5-phospho-D-ribosyl)imidazole-4-carboxylate + L-aspartate + ATP = (2S)-2-[5-amino-1-(5-phospho-beta-D-ribosyl)imidazole-4-carboxamido]succinate + ADP + phosphate + 2 H(+). The protein operates within purine metabolism; IMP biosynthesis via de novo pathway; 5-amino-1-(5-phospho-D-ribosyl)imidazole-4-carboxamide from 5-amino-1-(5-phospho-D-ribosyl)imidazole-4-carboxylate: step 1/2. The protein is Phosphoribosylaminoimidazole-succinocarboxamide synthase of Ruegeria pomeroyi (strain ATCC 700808 / DSM 15171 / DSS-3) (Silicibacter pomeroyi).